We begin with the raw amino-acid sequence, 513 residues long: 2,3-bisphosphoglycerate-independent phosphoglycerate mutase (513 aa).

Asp-12 and Ser-62 together coordinate Mn(2+). Ser-62 acts as the Phosphoserine intermediate in catalysis. Substrate contacts are provided by residues His-123, 153–154 (RD), Arg-185, Arg-191, 261–264 (RSDR), and Lys-335. Asp-402, His-406, Asp-443, His-444, and His-462 together coordinate Mn(2+).

This sequence belongs to the BPG-independent phosphoglycerate mutase family. As to quaternary structure, monomer. The cofactor is Mn(2+).

The enzyme catalyses (2R)-2-phosphoglycerate = (2R)-3-phosphoglycerate. The protein operates within carbohydrate degradation; glycolysis; pyruvate from D-glyceraldehyde 3-phosphate: step 3/5. Functionally, catalyzes the interconversion of 2-phosphoglycerate and 3-phosphoglycerate. This chain is 2,3-bisphosphoglycerate-independent phosphoglycerate mutase, found in Thiobacillus denitrificans (strain ATCC 25259 / T1).